The sequence spans 65 residues: Large ribosomal subunit protein bL33c (65 aa).

It belongs to the bacterial ribosomal protein bL33 family.

Its subcellular location is the plastid. It is found in the chloroplast. The chain is Large ribosomal subunit protein bL33c from Zygnema circumcarinatum (Green alga).